Reading from the N-terminus, the 597-residue chain is Arginine--tRNA ligase (597 aa).

The short motif at 125–135 (PNTNKPLHLGH) is the 'HIGH' region element.

This sequence belongs to the class-I aminoacyl-tRNA synthetase family. In terms of assembly, monomer.

It localises to the cytoplasm. It catalyses the reaction tRNA(Arg) + L-arginine + ATP = L-arginyl-tRNA(Arg) + AMP + diphosphate. This Bacteroides fragilis (strain YCH46) protein is Arginine--tRNA ligase.